We begin with the raw amino-acid sequence, 826 residues long: Ubiquitin carboxyl-terminal hydrolase 16 (826 aa).

A UBP-type zinc finger spans residues 22-142; it reads PMCRHIRKGL…QVVDYVRKQA (121 aa). Cys-24, His-26, Cys-48, Cys-51, Cys-74, Cys-77, Cys-82, His-90, His-94, His-103, Cys-116, and Cys-119 together coordinate Zn(2+). A Glycyl lysine isopeptide (Lys-Gly) (interchain with G-Cter in SUMO2) cross-link involves residue Lys-140. The tract at residues 146 to 190 is disordered; the sequence is TPKPAEKDNGNIELENKKLEKESKNEQEREKKENMAKENPPMNSP. The segment covering 149 to 181 has biased composition (basic and acidic residues); that stretch reads PAEKDNGNIELENKKLEKESKNEQEREKKENMA. A Phosphoserine modification is found at Ser-189. The USP domain occupies 196-825; it reads KGLSNLGNTC…QAYLLFYERI (630 aa). Catalysis depends on Cys-205, which acts as the Nucleophile. Residues 394-408 are compositionally biased toward basic and acidic residues; sequence SGKKSVNDKNLKKTM. The segment at 394-460 is disordered; that stretch reads SGKKSVNDKN…AKNQRRQQKI (67 aa). A compositionally biased stretch (acidic residues) spans 409–420; that stretch reads EDEDQDSEEEKD. At Ser-415 the chain carries Phosphoserine. A compositionally biased stretch (basic and acidic residues) spans 421 to 430; the sequence is NDSYIKERSD. Residues 438-458 show a composition bias toward basic residues; it reads HLQKKAKKQAKKQAKNQRRQQ. A Phosphoserine modification is found at Ser-552. Thr-557 carries the post-translational modification Phosphothreonine. The Proton acceptor role is filled by His-761.

Belongs to the peptidase C19 family. USP16 subfamily. In terms of assembly, homotetramer. Associates with late pre-40S ribosomes. Interacts with CEP78; promoting deubiquitination of tektins. Phosphorylated at the onset of mitosis and dephosphorylated during the metaphase/anaphase transition. Phosphorylation by AURKB enhances the deubiquitinase activity.

Its subcellular location is the nucleus. The catalysed reaction is Thiol-dependent hydrolysis of ester, thioester, amide, peptide and isopeptide bonds formed by the C-terminal Gly of ubiquitin (a 76-residue protein attached to proteins as an intracellular targeting signal).. Specifically deubiquitinates 'Lys-120' of histone H2A (H2AK119Ub), a specific tag for epigenetic transcriptional repression, thereby acting as a coactivator. Deubiquitination of histone H2A is a prerequisite for subsequent phosphorylation at 'Ser-11' of histone H3 (H3S10ph), and is required for chromosome segregation when cells enter into mitosis. In resting B- and T-lymphocytes, phosphorylation by AURKB leads to enhance its activity, thereby maintaining transcription in resting lymphocytes. Regulates Hox gene expression via histone H2A deubiquitination. Prefers nucleosomal substrates. Does not deubiquitinate histone H2B. Also deubiquitinates non-histone proteins, such as ribosomal protein RPS27A: deubiquitination of monoubiquitinated RPS27A promotes maturation of the 40S ribosomal subunit. Also mediates deubiquitination of tektin proteins (TEKT1, TEKT2, TEK3, TEKT4 and TEKT5), promoting their stability. The sequence is that of Ubiquitin carboxyl-terminal hydrolase 16 from Macaca fascicularis (Crab-eating macaque).